The following is a 211-amino-acid chain: Imidazole glycerol phosphate synthase subunit HisH (211 aa).

The 211-residue stretch at 1–211 (MIGIIDYGMG…ASIIEGKGSM (211 aa)) folds into the Glutamine amidotransferase type-1 domain. C79 acts as the Nucleophile in catalysis. Catalysis depends on residues H186 and E188.

As to quaternary structure, heterodimer of HisH and HisF.

The protein resides in the cytoplasm. It catalyses the reaction 5-[(5-phospho-1-deoxy-D-ribulos-1-ylimino)methylamino]-1-(5-phospho-beta-D-ribosyl)imidazole-4-carboxamide + L-glutamine = D-erythro-1-(imidazol-4-yl)glycerol 3-phosphate + 5-amino-1-(5-phospho-beta-D-ribosyl)imidazole-4-carboxamide + L-glutamate + H(+). The enzyme catalyses L-glutamine + H2O = L-glutamate + NH4(+). The protein operates within amino-acid biosynthesis; L-histidine biosynthesis; L-histidine from 5-phospho-alpha-D-ribose 1-diphosphate: step 5/9. Its function is as follows. IGPS catalyzes the conversion of PRFAR and glutamine to IGP, AICAR and glutamate. The HisH subunit catalyzes the hydrolysis of glutamine to glutamate and ammonia as part of the synthesis of IGP and AICAR. The resulting ammonia molecule is channeled to the active site of HisF. The protein is Imidazole glycerol phosphate synthase subunit HisH of Geobacillus sp. (strain WCH70).